Reading from the N-terminus, the 614-residue chain is Putative N(6)-adenosine-methyltransferase MT-A70-like (614 aa).

The segment at 59–78 (TPPLTNFNPPKSSSLQQLPQ) is disordered. Residues 67–78 (PPKSSSLQQLPQ) are compositionally biased toward low complexity. Residues 391–392 (DI) and Asp409 contribute to the S-adenosyl-L-methionine site. A positively charged region required for RNA-binding region spans residues 479-492 (RIIRTGRTGHWLNH). S-adenosyl-L-methionine-binding positions include Lys526, 549-552 (RMHN), and 562-563 (NQ). The interval 589–614 (PASPSRASAMELDSSVAAQTTTSAMM) is disordered. Residues 604-614 (VAAQTTTSAMM) are compositionally biased toward polar residues.

It belongs to the MT-A70-like family.

It is found in the nucleus. The catalysed reaction is an adenosine in mRNA + S-adenosyl-L-methionine = an N(6)-methyladenosine in mRNA + S-adenosyl-L-homocysteine + H(+). Its function is as follows. Putative N6-methyltransferase that methylates adenosine residues of some mRNAs. N6-methyladenosine (m6A), which is present at internal sites of some mRNAs, may play a role in the efficiency of mRNA splicing, transport or translation. In Medicago truncatula (Barrel medic), this protein is Putative N(6)-adenosine-methyltransferase MT-A70-like.